The primary structure comprises 230 residues: RNA polymerase sigma factor FliA (230 aa).

Residues L6–W78 form a sigma-70 factor domain-2 region. The Interaction with polymerase core subunit RpoC signature appears at D33–Q36. The interval N86 to D156 is sigma-70 factor domain-3. Positions A175 to R223 are sigma-70 factor domain-4. A DNA-binding region (H-T-H motif) is located at residues L197–S216.

This sequence belongs to the sigma-70 factor family. FliA subfamily.

Its subcellular location is the cytoplasm. Sigma factors are initiation factors that promote the attachment of RNA polymerase to specific initiation sites and are then released. This sigma factor controls the expression of flagella-related genes. This chain is RNA polymerase sigma factor FliA, found in Yersinia enterocolitica.